The sequence spans 314 residues: Cathepsin L 1 (314 aa).

The signal sequence occupies residues 1-24; that stretch reads MMLLGASLYLNNTQEVSDEIDTAN. Residues 25 to 109 constitute a propeptide, activation peptide; the sequence is LYANWKMKYN…NAANSNFQYK (85 aa). 3 disulfide bridges follow: Cys-132–Cys-175, Cys-166–Cys-207, and Cys-259–Cys-302. Cys-135 is an active-site residue. Catalysis depends on residues His-265 and Asn-282.

The protein belongs to the peptidase C1 family.

It localises to the secreted. The enzyme catalyses Specificity close to that of papain. As compared to cathepsin B, cathepsin L exhibits higher activity toward protein substrates, but has little activity on Z-Arg-Arg-NHMec, and no peptidyl-dipeptidase activity.. In terms of biological role, may be involved in extracellular digestion. The polypeptide is Cathepsin L 1 (Paramecium tetraurelia).